A 336-amino-acid chain; its full sequence is Dihydroorotate dehydrogenase (quinone) (336 aa).

FMN-binding positions include 62 to 66 (AGLDK) and Thr86. Lys66 lines the substrate pocket. Residue 111–115 (NRMGF) participates in substrate binding. Residues Asn139 and Asn172 each coordinate FMN. Residue Asn172 coordinates substrate. Ser175 functions as the Nucleophile in the catalytic mechanism. Substrate is bound at residue Asn177. FMN contacts are provided by Lys217 and Thr245. Residue 246-247 (NT) coordinates substrate. Residues Gly268, Gly297, and 318–319 (YS) contribute to the FMN site.

This sequence belongs to the dihydroorotate dehydrogenase family. Type 2 subfamily. In terms of assembly, monomer. FMN is required as a cofactor.

The protein localises to the cell membrane. It catalyses the reaction (S)-dihydroorotate + a quinone = orotate + a quinol. Its pathway is pyrimidine metabolism; UMP biosynthesis via de novo pathway; orotate from (S)-dihydroorotate (quinone route): step 1/1. Catalyzes the conversion of dihydroorotate to orotate with quinone as electron acceptor. The polypeptide is Dihydroorotate dehydrogenase (quinone) (Serratia proteamaculans (strain 568)).